Consider the following 949-residue polypeptide: Glycine dehydrogenase (decarboxylating) (949 aa).

An N6-(pyridoxal phosphate)lysine modification is found at Lys-699.

The protein belongs to the GcvP family. The glycine cleavage system is composed of four proteins: P, T, L and H. Pyridoxal 5'-phosphate is required as a cofactor.

The enzyme catalyses N(6)-[(R)-lipoyl]-L-lysyl-[glycine-cleavage complex H protein] + glycine + H(+) = N(6)-[(R)-S(8)-aminomethyldihydrolipoyl]-L-lysyl-[glycine-cleavage complex H protein] + CO2. The glycine cleavage system catalyzes the degradation of glycine. The P protein binds the alpha-amino group of glycine through its pyridoxal phosphate cofactor; CO(2) is released and the remaining methylamine moiety is then transferred to the lipoamide cofactor of the H protein. The sequence is that of Glycine dehydrogenase (decarboxylating) from Roseobacter denitrificans (strain ATCC 33942 / OCh 114) (Erythrobacter sp. (strain OCh 114)).